Here is a 288-residue protein sequence, read N- to C-terminus: ATP synthase gamma chain 1 (288 aa).

It belongs to the ATPase gamma chain family. In terms of assembly, F-type ATPases have 2 components, CF(1) - the catalytic core - and CF(0) - the membrane proton channel. CF(1) has five subunits: alpha(3), beta(3), gamma(1), delta(1), epsilon(1). CF(0) has three main subunits: a, b and c.

It is found in the cell inner membrane. Produces ATP from ADP in the presence of a proton gradient across the membrane. The gamma chain is believed to be important in regulating ATPase activity and the flow of protons through the CF(0) complex. The chain is ATP synthase gamma chain 1 from Photobacterium profundum (strain SS9).